The following is a 198-amino-acid chain: Dual specificity protein phosphatase 14 (198 aa).

Residues Gly-26–Gly-167 enclose the Tyrosine-protein phosphatase domain. Cys-111 (phosphocysteine intermediate) is an active-site residue.

The protein belongs to the protein-tyrosine phosphatase family. Non-receptor class dual specificity subfamily. In terms of assembly, interacts with CD28.

The catalysed reaction is O-phospho-L-tyrosyl-[protein] + H2O = L-tyrosyl-[protein] + phosphate. It catalyses the reaction O-phospho-L-seryl-[protein] + H2O = L-seryl-[protein] + phosphate. It carries out the reaction O-phospho-L-threonyl-[protein] + H2O = L-threonyl-[protein] + phosphate. In terms of biological role, involved in the inactivation of MAP kinases. Dephosphorylates ERK, JNK and p38 MAP-kinases. Plays a negative role in TCR signaling by dephosphorylating MAP3K7 adapter TAB1 leading to its inactivation. This is Dual specificity protein phosphatase 14 (DUSP14) from Homo sapiens (Human).